We begin with the raw amino-acid sequence, 529 residues long: MAEDSESAASQQSLELDDQDTCGIDGDNEEETEHAKGSPGGDLGAKKKKKKQKRKKEKPNSGGTKSDSASDSQEIKIQQSSKHNAIWQQISAGAAMGGDTMEGEWIDLRMYHKNPTIPIQKLQDIQRAMELLSACQGPARNIDEATKRRYQFWDTQPVPKLNEVITSHGAIEPDKDNIRQEPYSLPQGFMWDTLDLSNAEVLKELYTLLNENYVEDDDNMFRFDYSPEFLLWALRPPGWLLQWHCGVRVSSNKKLVGFISAIPANIRIYDSVKRMVEINFLCVHKKLRSKRVAPVLIREITRRVNLEGIFQAVYTAGVVLPKPVATCRYWHRSLNPRKLVEVKFSHLSRNMTLQRTMKLYRLPDVTKTSGLRPMEPKDIKAVRELINIYLKQFHLAPVMDDAEVAHWFLPREHIIDTFVVENPSGKLTDFLSFYTLPSTVMHHPAHKSLKAAYSFYNIHTETPLLDLMNDALIIAKLKGFDVFNALDLMENKTFLEKLKFGIGDGNLQYYLYNWRCPGTDSEKVGLVLQ.

Positions 1–82 (MAEDSESAAS…QEIKIQQSSK (82 aa)) are disordered. A compositionally biased stretch (acidic residues) spans 15–32 (ELDDQDTCGIDGDNEEET). S38 is modified (phosphoserine). Basic residues predominate over residues 46–57 (KKKKKKQKRKKE). Residues 61–82 (SGGTKSDSASDSQEIKIQQSSK) show a composition bias toward polar residues. Tetradecanoyl-CoA contacts are provided by W153, L281, V283, S289, R291, V292, and A293.

It belongs to the NMT family.

Its subcellular location is the cytoplasm. The protein localises to the membrane. It carries out the reaction N-terminal glycyl-[protein] + tetradecanoyl-CoA = N-tetradecanoylglycyl-[protein] + CoA + H(+). The catalysed reaction is N-terminal glycyl-L-lysyl-[protein] + tetradecanoyl-CoA = N-terminal glycyl-(N(6)-tetradecanoyl)-L-lysyl-[protein] + CoA + H(+). Its function is as follows. Adds a myristoyl group to the N-terminal glycine residue of certain cellular and viral proteins. Also able to mediate N-terminal lysine myristoylation of proteins: catalyzes myristoylation of ARF6 on both 'Gly-2' and 'Lys-3'. Lysine myristoylation is required to maintain ARF6 on membranes during the GTPase cycle. The protein is Glycylpeptide N-tetradecanoyltransferase 2 (Nmt2) of Mus musculus (Mouse).